We begin with the raw amino-acid sequence, 99 residues long: MEKYLLLLLLGIFLRVGFLQALTCVSCGRLNSSGICETAETSCEATNNRKCALRLLYKDGKFQYGFQGCLGTCFNYTKTNNNMVKEHKCCDHQNLCNKP.

The N-terminal stretch at 1-21 is a signal peptide; it reads MEKYLLLLLLGIFLRVGFLQA. The UPAR/Ly6 domain occupies 22–99; sequence LTCVSCGRLN…CDHQNLCNKP (78 aa). 5 cysteine pairs are disulfide-bonded: Cys24–Cys51, Cys27–Cys36, Cys43–Cys69, Cys73–Cys89, and Cys90–Cys96. N-linked (GlcNAc...) asparagine glycosylation occurs at Asn31. An N-linked (GlcNAc...) asparagine glycan is attached at Asn75.

Belongs to the PATE family. In terms of assembly, monomer. In terms of processing, glycosylated. Predominantly expressed in the seminal vesicles. Expressed in prostate, and to a lesser extent in the cauda epididymis.

It is found in the secreted. The polypeptide is Prostate and testis expressed protein 14 (Mus musculus (Mouse)).